Reading from the N-terminus, the 1502-residue chain is Clustered mitochondria protein homolog (1502 aa).

Disordered regions lie at residues 1–62 (MSES…EPLD), 571–615 (AQAE…NPMM), 755–799 (AEAE…EEDR), 1054–1085 (KDQE…GETV), 1381–1403 (ARER…RLGG), and 1429–1502 (GQGG…GAKR). A compositionally biased stretch (low complexity) spans 7–35 (AAAQNGQAEEQQLQQQLDEQQQLEEQQQL). Residues 53–62 (KPKDSTEPLD) show a composition bias toward basic and acidic residues. In terms of domain architecture, Clu spans 399 to 693 (EILRTQLAFL…RLAPVDVEWL (295 aa)). The span at 575–586 (TEAEAETADAVE) shows a compositional bias: acidic residues. Over residues 587–606 (GEQKKEDWVDVEKPTEKSGS) the composition is skewed to basic and acidic residues. Over residues 781-792 (EEQSAAASAAAA) the composition is skewed to low complexity. Residues 1054 to 1069 (KDQEEEENKREENIKS) are compositionally biased toward basic and acidic residues. Residues 1429 to 1451 (GQGGNPSANAAAATAGQGEQANG) are compositionally biased toward low complexity. Positions 1462-1471 (RGTESLEELV) are enriched in basic and acidic residues. Positions 1486–1502 (KRGKNALRGKRRTGAKR) are enriched in basic residues.

This sequence belongs to the CLU family. In terms of assembly, may associate with the eukaryotic translation initiation factor 3 (eIF-3) complex.

It localises to the cytoplasm. In terms of biological role, mRNA-binding protein involved in proper cytoplasmic distribution of mitochondria. In Cryptococcus neoformans var. neoformans serotype D (strain B-3501A) (Filobasidiella neoformans), this protein is Clustered mitochondria protein homolog.